A 189-amino-acid chain; its full sequence is Putative manganese efflux pump MntP (189 aa).

The next 6 membrane-spanning stretches (helical) occupy residues 3–23 (LSATIILAFAMSMDAFAASIG), 41–61 (LIFGVIEAITPLIGWCIGLFA), 65–85 (IMEWDHWIAFSLLFILGCRMI), 104–124 (FWVLVTTAIATSLDAMAIGVG), 132–152 (IVHTAMAIGLATMIMATLGML), and 167–187 (IIGGIVLIGIGFNILYEHMHL).

Belongs to the MntP (TC 9.B.29) family.

Its subcellular location is the cell inner membrane. In terms of biological role, probably functions as a manganese efflux pump. This is Putative manganese efflux pump MntP from Yersinia pseudotuberculosis serotype O:1b (strain IP 31758).